Reading from the N-terminus, the 359-residue chain is Membrane-bound lytic murein transglycosylase C (359 aa).

The signal sequence occupies residues 1–16 (MKKYLALALIAPLLIS). C17 carries the N-palmitoyl cysteine lipid modification. C17 carries S-diacylglycerol cysteine lipidation.

This sequence belongs to the transglycosylase Slt family.

It is found in the cell outer membrane. The enzyme catalyses Exolytic cleavage of the (1-&gt;4)-beta-glycosidic linkage between N-acetylmuramic acid (MurNAc) and N-acetylglucosamine (GlcNAc) residues in peptidoglycan, from either the reducing or the non-reducing ends of the peptidoglycan chains, with concomitant formation of a 1,6-anhydrobond in the MurNAc residue.. Its function is as follows. Murein-degrading enzyme. May play a role in recycling of muropeptides during cell elongation and/or cell division. This is Membrane-bound lytic murein transglycosylase C from Shigella dysenteriae serotype 1 (strain Sd197).